The following is a 365-amino-acid chain: P2Y purinoceptor 4 (365 aa).

The Extracellular segment spans residues 1–34 (MASTESSLLRSLGLSPGPGSSEVELDCWFDEDFK). The chain crosses the membrane as a helical span at residues 35–61 (FILLPVSYAVVFVLGLGLNAPTLWLFI). The Cytoplasmic segment spans residues 62–72 (FRLRPWDATAT). The chain crosses the membrane as a helical span at residues 73–95 (YMFHLALSDTLYVLSLPTLIYYY). At 96 to 112 (AAHNHWPFGTEICKFVR) the chain is on the extracellular side. Cys-108 and Cys-185 are joined by a disulfide. The chain crosses the membrane as a helical span at residues 113–131 (FLFYWNLYCSVLFLTCISV). Residues 132–154 (HRYLGICHPLRALRWGRPRLAGL) are Cytoplasmic-facing. Residues 155-174 (LCLAVWLVVAGCLVPNLFFV) traverse the membrane as a helical segment. Over 175-196 (TTSNKGTTVLCHDTTRPEEFDH) the chain is Extracellular. The chain crosses the membrane as a helical span at residues 197–222 (YVHFSSAVMGLLFGVPCLVTLVCYGL). The Cytoplasmic portion of the chain corresponds to 223–246 (MARRLYQPLPGSAQSSSRLRSLRT). A helical transmembrane segment spans residues 247–269 (IAVVLTVFAVCFVPFHITRTIYY). The Extracellular portion of the chain corresponds to 270-287 (LARLLEADCRVLNIVNVV). A helical transmembrane segment spans residues 288–309 (YKVTRPLASANSCLDPVLYLLT). The Cytoplasmic segment spans residues 310–365 (GDKYRRQLRQLCGGGKPQPRTAASSLALVSLPEDSSCRWAATPQDSSCSTPRADRL). Ser-333 and Ser-334 each carry phosphoserine.

It belongs to the G-protein coupled receptor 1 family. Post-translationally, phosphorylation of Ser-333 and Ser-334 is a key step in agonist-dependent desensitization and loss of surface P2RY4. This phosphorylation does not involve PKC, nor other calcium activated kinases. As to expression, pancreas.

The protein localises to the cell membrane. In terms of biological role, receptor for UTP and UDP coupled to G-proteins that activate a phosphatidylinositol-calcium second messenger system. Not activated by ATP or ADP. This is P2Y purinoceptor 4 (P2RY4) from Homo sapiens (Human).